A 117-amino-acid polypeptide reads, in one-letter code: Large ribosomal subunit protein bL20c (117 aa).

It belongs to the bacterial ribosomal protein bL20 family.

The protein localises to the plastid. The protein resides in the chloroplast. Functionally, binds directly to 23S ribosomal RNA and is necessary for the in vitro assembly process of the 50S ribosomal subunit. It is not involved in the protein synthesizing functions of that subunit. The sequence is that of Large ribosomal subunit protein bL20c from Thalassiosira pseudonana (Marine diatom).